Here is a 474-residue protein sequence, read N- to C-terminus: Trehalose-6-phosphate synthase (474 aa).

R10 is a binding site for D-glucose 6-phosphate. Residue 22 to 23 (GG) coordinates UDP-alpha-D-glucose. Residues Y77 and D131 each contribute to the D-glucose 6-phosphate site. UDP-alpha-D-glucose contacts are provided by R263 and K268. D-glucose 6-phosphate is bound at residue R301. Residues F340 and 366–370 (LVAKE) contribute to the UDP-alpha-D-glucose site.

The protein belongs to the glycosyltransferase 20 family. As to quaternary structure, homotetramer.

The catalysed reaction is D-glucose 6-phosphate + UDP-alpha-D-glucose = alpha,alpha-trehalose 6-phosphate + UDP + H(+). It functions in the pathway glycan biosynthesis; trehalose biosynthesis. Probably involved in the osmoprotection via the biosynthesis of trehalose. Catalyzes the transfer of glucose from UDP-alpha-D-glucose (UDP-Glc) to D-glucose 6-phosphate (Glc-6-P) to form trehalose-6-phosphate. Acts with retention of the anomeric configuration of the UDP-sugar donor. The chain is Trehalose-6-phosphate synthase from Escherichia coli O1:K1 / APEC.